The sequence spans 226 residues: Enolase-phosphatase E1 (226 aa).

It belongs to the HAD-like hydrolase superfamily. MasA/MtnC family. As to quaternary structure, monomer. Mg(2+) serves as cofactor.

It catalyses the reaction 5-methylsulfanyl-2,3-dioxopentyl phosphate + H2O = 1,2-dihydroxy-5-(methylsulfanyl)pent-1-en-3-one + phosphate. The protein operates within amino-acid biosynthesis; L-methionine biosynthesis via salvage pathway; L-methionine from S-methyl-5-thio-alpha-D-ribose 1-phosphate: step 3/6. It functions in the pathway amino-acid biosynthesis; L-methionine biosynthesis via salvage pathway; L-methionine from S-methyl-5-thio-alpha-D-ribose 1-phosphate: step 4/6. In terms of biological role, bifunctional enzyme that catalyzes the enolization of 2,3-diketo-5-methylthiopentyl-1-phosphate (DK-MTP-1-P) into the intermediate 2-hydroxy-3-keto-5-methylthiopentenyl-1-phosphate (HK-MTPenyl-1-P), which is then dephosphorylated to form the acireductone 1,2-dihydroxy-3-keto-5-methylthiopentene (DHK-MTPene). The polypeptide is Enolase-phosphatase E1 (Shewanella frigidimarina (strain NCIMB 400)).